A 1360-amino-acid polypeptide reads, in one-letter code: Probable inactive protein kinase DDB_G0270444 (1360 aa).

WD repeat units lie at residues 44–83, 109–152, 166–205, and 208–247; these read SSKR…IKQL, IRNI…AVYN, TTSA…IMGT, and GHSR…QITG. The 319-residue stretch at 636-954 folds into the Protein kinase domain; sequence EKSIQTYLSN…IEQALSHPFI (319 aa). Positions 959-979 are enriched in low complexity; it reads KQQQQQQQQKQQQQQQQQQQQ. Disordered stretches follow at residues 959 to 989, 1258 to 1311, and 1331 to 1360; these read KQQQ…DSLT, IISE…VEEE, and EVEE…SNDF. Coiled-coil stretches lie at residues 1014–1269 and 1297–1352; these read SKIK…QEGE and NASD…QVED. Basic and acidic residues predominate over residues 1291–1300; it reads LERDNKNASD. Acidic residues-rich tracts occupy residues 1301–1311 and 1331–1354; these read HDDEQQFVEEE and EVEE…EDDT.

This sequence belongs to the protein kinase superfamily. CMGC Ser/Thr protein kinase family.

The polypeptide is Probable inactive protein kinase DDB_G0270444 (Dictyostelium discoideum (Social amoeba)).